The chain runs to 555 residues: Phosphomethylpyrimidine synthase (555 aa).

A disordered region spans residues 78–104 (VRDRWGFDNGSAESTKGELSMSERKPR). Substrate contacts are provided by residues N191, M220, Y249, H285, 305–307 (SRG), 346–349 (DALR), and E385. H389 serves as a coordination point for Zn(2+). Y412 provides a ligand contact to substrate. Position 453 (H453) interacts with Zn(2+). [4Fe-4S] cluster-binding residues include C535, C538, and C543.

This sequence belongs to the ThiC family. It depends on [4Fe-4S] cluster as a cofactor.

The enzyme catalyses 5-amino-1-(5-phospho-beta-D-ribosyl)imidazole + S-adenosyl-L-methionine = 4-amino-2-methyl-5-(phosphooxymethyl)pyrimidine + CO + 5'-deoxyadenosine + formate + L-methionine + 3 H(+). The protein operates within cofactor biosynthesis; thiamine diphosphate biosynthesis. Functionally, catalyzes the synthesis of the hydroxymethylpyrimidine phosphate (HMP-P) moiety of thiamine from aminoimidazole ribotide (AIR) in a radical S-adenosyl-L-methionine (SAM)-dependent reaction. This Chlorobaculum parvum (strain DSM 263 / NCIMB 8327) (Chlorobium vibrioforme subsp. thiosulfatophilum) protein is Phosphomethylpyrimidine synthase.